The chain runs to 100 residues: Small ribosomal subunit protein uS14c (100 aa).

Belongs to the universal ribosomal protein uS14 family. Part of the 30S ribosomal subunit.

The protein localises to the plastid. It is found in the chloroplast. In terms of biological role, binds 16S rRNA, required for the assembly of 30S particles. The protein is Small ribosomal subunit protein uS14c of Buxus microphylla (Littleleaf boxwood).